The chain runs to 336 residues: tRNA N6-adenosine threonylcarbamoyltransferase (336 aa).

Fe cation is bound by residues His-111 and His-115. Residues 134-138, Asp-167, Gly-180, and Asn-271 each bind substrate; that span reads LVSGG. Asp-299 contributes to the Fe cation binding site.

It belongs to the KAE1 / TsaD family. It depends on Fe(2+) as a cofactor.

Its subcellular location is the cytoplasm. The enzyme catalyses L-threonylcarbamoyladenylate + adenosine(37) in tRNA = N(6)-L-threonylcarbamoyladenosine(37) in tRNA + AMP + H(+). Required for the formation of a threonylcarbamoyl group on adenosine at position 37 (t(6)A37) in tRNAs that read codons beginning with adenine. Is involved in the transfer of the threonylcarbamoyl moiety of threonylcarbamoyl-AMP (TC-AMP) to the N6 group of A37, together with TsaE and TsaB. TsaD likely plays a direct catalytic role in this reaction. The protein is tRNA N6-adenosine threonylcarbamoyltransferase of Thioalkalivibrio sulfidiphilus (strain HL-EbGR7).